Consider the following 241-residue polypeptide: MNFPYRNIVVLTGAGISAESGIQTFRAQDGLWENHRIEDVATPEGFARDPDLVQSFYNQRRQKLQDETIKPNAAHLALGRLEAELEGKVTVITQNIDNLHERGGSQNVIHMHGELLKARCSESNQVIEHTEDIKTGELCHCCQIPSQMRPHIVWFGEMRLRMGEIYAALEEADLFVSIGTSGVVYPAAGFVHDAKMHGAHTIEINLEPSAVESEFEEKRYGKASVEVPKLVDEILALDTKA.

The Deacetylase sirtuin-type domain maps to 1-237 (MNFPYRNIVV…PKLVDEILAL (237 aa)). Residue 13 to 32 (GAGISAESGIQTFRAQDGLW) participates in NAD(+) binding. Substrate contacts are provided by Y57 and R60. Position 94–97 (94–97 (QNID)) interacts with NAD(+). H112 (proton acceptor) is an active-site residue. 2 residues coordinate Zn(2+): C120 and C139. Residues 179–181 (GTS), 205–207 (NLE), and A223 contribute to the NAD(+) site.

It belongs to the sirtuin family. Class III subfamily. In terms of assembly, monomer. It depends on Zn(2+) as a cofactor.

The protein localises to the cytoplasm. Its subcellular location is the host cytoplasm. It localises to the host cytosol. The protein resides in the host nucleus. The catalysed reaction is N(6)-acetyl-L-lysyl-[protein] + NAD(+) + H2O = 2''-O-acetyl-ADP-D-ribose + nicotinamide + L-lysyl-[protein]. It catalyses the reaction N(6)-succinyl-L-lysyl-[protein] + NAD(+) + H2O = 2''-O-succinyl-ADP-D-ribose + nicotinamide + L-lysyl-[protein]. Its function is as follows. NAD-dependent lysine deacetylase and desuccinylase that specifically removes acetyl and succinyl groups on target proteins. Modulates the activities of several proteins which are inactive in their acylated form. In the intracellular pathogen V.parahaemolyticus, this enzyme regulates host response during infection by induction of host histone deacetylation; it specifically causes deacetylation of histone lysine residues H3K56, H3K9, H3K18 and H4K16 which results in transcriptional repression of several host genes involved in epigenetic regulation, immune response, and autophagy. The protein is NAD-dependent protein deacylase of Vibrio parahaemolyticus serotype O3:K6 (strain RIMD 2210633).